The following is a 125-amino-acid chain: Large ribosomal subunit protein bL19 (125 aa).

The protein belongs to the bacterial ribosomal protein bL19 family.

Its function is as follows. This protein is located at the 30S-50S ribosomal subunit interface and may play a role in the structure and function of the aminoacyl-tRNA binding site. In Ehrlichia chaffeensis (strain ATCC CRL-10679 / Arkansas), this protein is Large ribosomal subunit protein bL19.